Consider the following 394-residue polypeptide: Phosphopentomutase (394 aa).

Positions 13, 286, 291, 327, 328, and 339 each coordinate Mn(2+).

It belongs to the phosphopentomutase family. Mn(2+) is required as a cofactor.

The protein resides in the cytoplasm. The enzyme catalyses 2-deoxy-alpha-D-ribose 1-phosphate = 2-deoxy-D-ribose 5-phosphate. It catalyses the reaction alpha-D-ribose 1-phosphate = D-ribose 5-phosphate. The protein operates within carbohydrate degradation; 2-deoxy-D-ribose 1-phosphate degradation; D-glyceraldehyde 3-phosphate and acetaldehyde from 2-deoxy-alpha-D-ribose 1-phosphate: step 1/2. In terms of biological role, isomerase that catalyzes the conversion of deoxy-ribose 1-phosphate (dRib-1-P) and ribose 1-phosphate (Rib-1-P) to deoxy-ribose 5-phosphate (dRib-5-P) and ribose 5-phosphate (Rib-5-P), respectively. This Bacillus cereus (strain AH187) protein is Phosphopentomutase.